The primary structure comprises 75 residues: Guanine nucleotide-binding protein G(I)/G(S)/G(O) subunit gamma-4 (75 aa).

At Cys-72 the chain carries Cysteine methyl ester. Cys-72 carries S-geranylgeranyl cysteine lipidation. Positions 73–75 (TIL) are cleaved as a propeptide — removed in mature form.

It belongs to the G protein gamma family. In terms of assembly, g proteins are composed of 3 units, alpha, beta and gamma. Interacts with beta-1 and beta-2, but not with beta-3. Interacts with KCNK1. Interacts (via C-terminus) with KCNK2/TREK-1 (via N-terminus); this interaction confers ion selectivity to Cl(-) and L-glutamate. Brain, kidney, pancreas, skeletal muscle and faintly in cardiac muscle.

Its subcellular location is the cell membrane. Guanine nucleotide-binding proteins (G proteins) are involved as a modulator or transducer in various transmembrane signaling systems. The beta and gamma chains are required for the GTPase activity, for replacement of GDP by GTP, and for G protein-effector interaction. This Homo sapiens (Human) protein is Guanine nucleotide-binding protein G(I)/G(S)/G(O) subunit gamma-4 (GNG4).